Here is a 448-residue protein sequence, read N- to C-terminus: MGKYFGTDGVRGVANSELTPELAFKVGRFGGYVLTKDKERPKVLIGRDTRISGHMLEGALVAGLLSIGAEVMRLGVISTPGVAYLTKAMDAEAGVMISASHNPVQDNGIKFFGGDGFKLSDEQELEIERLMDQPEDHLPRPVGADLGMVNDYFEGGQKYLQFLKQSADEDFTGIHVALDCAHGATSSLATHLFADLDADVSTMGTSPNGLNINDGVGSTHPEALAEFVKEKGADVGMAFDGDGDRLIAVDEKGNIVDGDQIMYICAKYLKSEGRLTDNTVVSTVMSNLGFYKALEAEGIKSVQTAVGDRYVVEAMKKGGFTLGGEQSGHLIFLDYNTTGDGLLSAIMLMNTIKMTGKPLSELAAEMQKFPQLLLNVKVTDKHKVTENEKVKAVIEEVEKEMNGDGRILVRPSGTEPLVRVMAEAKTKELCEKYVGRIADVVKAEMGAE.

The active-site Phosphoserine intermediate is the S100. S100, D240, D242, and D244 together coordinate Mg(2+). A Phosphoserine modification is found at S100.

It belongs to the phosphohexose mutase family. Requires Mg(2+) as cofactor. Post-translationally, activated by phosphorylation.

The enzyme catalyses alpha-D-glucosamine 1-phosphate = D-glucosamine 6-phosphate. In terms of biological role, catalyzes the conversion of glucosamine-6-phosphate to glucosamine-1-phosphate. The polypeptide is Phosphoglucosamine mutase (Bacillus licheniformis (strain ATCC 14580 / DSM 13 / JCM 2505 / CCUG 7422 / NBRC 12200 / NCIMB 9375 / NCTC 10341 / NRRL NRS-1264 / Gibson 46)).